The following is a 249-amino-acid chain: tRNA pseudouridine synthase A (249 aa).

The active-site Nucleophile is aspartate 53. Tyrosine 111 lines the substrate pocket.

The protein belongs to the tRNA pseudouridine synthase TruA family. Homodimer.

It carries out the reaction uridine(38/39/40) in tRNA = pseudouridine(38/39/40) in tRNA. Formation of pseudouridine at positions 38, 39 and 40 in the anticodon stem and loop of transfer RNAs. The sequence is that of tRNA pseudouridine synthase A from Streptococcus suis (strain 98HAH33).